Here is a 475-residue protein sequence, read N- to C-terminus: Ribulose bisphosphate carboxylase large chain (475 aa).

Positions 1-2 (MS) are excised as a propeptide. Pro-3 carries the post-translational modification N-acetylproline. Lys-14 carries the N6,N6,N6-trimethyllysine modification. The substrate site is built by Asn-123 and Thr-173. Catalysis depends on Lys-175, which acts as the Proton acceptor. Lys-177 is a binding site for substrate. Residues Lys-201, Asp-203, and Glu-204 each coordinate Mg(2+). Lys-201 is modified (N6-carboxylysine). Catalysis depends on His-294, which acts as the Proton acceptor. Residues Arg-295, His-327, and Ser-379 each contribute to the substrate site.

This sequence belongs to the RuBisCO large chain family. Type I subfamily. Heterohexadecamer of 8 large chains and 8 small chains; disulfide-linked. The disulfide link is formed within the large subunit homodimers. Requires Mg(2+) as cofactor. Post-translationally, the disulfide bond which can form in the large chain dimeric partners within the hexadecamer appears to be associated with oxidative stress and protein turnover.

Its subcellular location is the plastid. It is found in the chloroplast. It carries out the reaction 2 (2R)-3-phosphoglycerate + 2 H(+) = D-ribulose 1,5-bisphosphate + CO2 + H2O. The catalysed reaction is D-ribulose 1,5-bisphosphate + O2 = 2-phosphoglycolate + (2R)-3-phosphoglycerate + 2 H(+). Functionally, ruBisCO catalyzes two reactions: the carboxylation of D-ribulose 1,5-bisphosphate, the primary event in carbon dioxide fixation, as well as the oxidative fragmentation of the pentose substrate in the photorespiration process. Both reactions occur simultaneously and in competition at the same active site. In Zygnema circumcarinatum (Green alga), this protein is Ribulose bisphosphate carboxylase large chain.